The following is a 359-amino-acid chain: 4-hydroxy-3-methylbut-2-en-1-yl diphosphate synthase (flavodoxin) (359 aa).

[4Fe-4S] cluster-binding residues include C264, C267, C299, and E306.

It belongs to the IspG family. It depends on [4Fe-4S] cluster as a cofactor.

The enzyme catalyses (2E)-4-hydroxy-3-methylbut-2-enyl diphosphate + oxidized [flavodoxin] + H2O + 2 H(+) = 2-C-methyl-D-erythritol 2,4-cyclic diphosphate + reduced [flavodoxin]. It participates in isoprenoid biosynthesis; isopentenyl diphosphate biosynthesis via DXP pathway; isopentenyl diphosphate from 1-deoxy-D-xylulose 5-phosphate: step 5/6. Converts 2C-methyl-D-erythritol 2,4-cyclodiphosphate (ME-2,4cPP) into 1-hydroxy-2-methyl-2-(E)-butenyl 4-diphosphate. The chain is 4-hydroxy-3-methylbut-2-en-1-yl diphosphate synthase (flavodoxin) from Mycoplasmoides gallisepticum (strain R(low / passage 15 / clone 2)) (Mycoplasma gallisepticum).